The sequence spans 1087 residues: A-kinase anchor protein 9 (1087 aa).

Residues 5-461 are a coiled coil; that stretch reads EVQCQAEKVR…REREKMERIQ (457 aa). The PKA-RII subunit binding domain stretch occupies residues 559 to 572; the sequence is SLQKVLEEKVAAAL. The stretch at 614-773 forms a coiled coil; it reads MESDVSALTW…SEKEDKTEVQ (160 aa). The segment covering 667 to 685 has biased composition (basic and acidic residues); it reads VQDSETKQRERERQSRLHG. The segment at 667–691 is disordered; sequence VQDSETKQRERERQSRLHGDLGVLE.

As to quaternary structure, interacts with the regulatory region of protein kinase N (PKN), protein phosphatase 2A (PP2A), protein phosphatase 1 (PP1) and the immature non-phosphorylated form of PKC epsilon. Interacts with CIP4 and FNBP1. Interacts with chloride intracellular channel proteins CLIC1, CLIC4 and CLIC5. CSNK1D binding promotes its centrosomal subcellular location. Interacts with GM130/GOLGA2; leading to recruitment to the Golgi apparatus. Interacts with KCNQ1; targets protein kinase A (PKA) catalytic and regulatory subunits and protein phosphatase 1 (PP1), to the heterodimer KCNQ1-KCNE1. Interacts with PDE4DIP; this interaction stabilizes both proteins. In complex with PDE4DIP, recruits CAMSAP2 to the Golgi apparatus. Forms a pericentrosomal complex with CDK5RAP2, EB1/MAPRE1 and PDE4DIP; within this complex, MAPRE1 binding to CDK5RAP2 may be mediated by PDE4DIP. The interaction with PDE4DIP is isoform-specific. Interacts with MAPRE1 and MAPRE3. Interacts (via C-terminus) with CAMSAP2; this interaction is much stronger in the presence of PDE4DIP. Interacts with CAMSAP3. Interacts (via C-terminus) with the gamma-tubulin ring complex (gamma-TuRC), composed of gamma-tubulin, TUBGCP2, TUBGCP3, TUBGCP4, TUBGCP5 and TUBGCP6. Highly expressed in gastric parietal cells.

The protein resides in the golgi apparatus. The protein localises to the cytoplasm. It is found in the cytoskeleton. It localises to the microtubule organizing center. Its subcellular location is the centrosome. Functionally, scaffolding protein that assembles several protein kinases and phosphatases on the centrosome and Golgi apparatus. Required to maintain the integrity of the Golgi apparatus. Required for microtubule nucleation at the cis-side of the Golgi apparatus. Required for association of the centrosomes with the poles of the bipolar mitotic spindle during metaphase. In complex with PDE4DIP, recruits CAMSAP2 to the Golgi apparatus and tethers non-centrosomal minus-end microtubules to the Golgi, an important step for polarized cell movement. In complex with PDE4DIP, EB1/MAPRE1 and CDK5RAP2, contributes to microtubules nucleation and extension also from the centrosome to the cell periphery. The interaction with PDE4DIP is isoform-specific. The sequence is that of A-kinase anchor protein 9 (AKAP9) from Oryctolagus cuniculus (Rabbit).